The following is a 90-amino-acid chain: PIK3R3 upstream open reading frame protein (90 aa).

A disordered region spans residues 1–63 (MGPSQLVRAP…PASEATNISD (63 aa)). Residues 27–46 (PRRRCPSMFKCSRRTYRQKP) are compositionally biased toward basic residues. Residues 50 to 63 (TATNPASEATNISD) show a composition bias toward polar residues.

This chain is PIK3R3 upstream open reading frame protein, found in Mus musculus (Mouse).